A 61-amino-acid chain; its full sequence is MAKKSMIAKSERPAKFSTQEYTRCERCGRPHSVYRKFHLCRICLRDLAHKGQIPGMKKASW.

Residues Cys-24, Cys-27, Cys-40, and Cys-43 each contribute to the Zn(2+) site.

It belongs to the universal ribosomal protein uS14 family. Zinc-binding uS14 subfamily. Part of the 30S ribosomal subunit. Contacts proteins S3 and S10. The cofactor is Zn(2+).

In terms of biological role, binds 16S rRNA, required for the assembly of 30S particles and may also be responsible for determining the conformation of the 16S rRNA at the A site. This chain is Small ribosomal subunit protein uS14, found in Limosilactobacillus fermentum (strain NBRC 3956 / LMG 18251) (Lactobacillus fermentum).